We begin with the raw amino-acid sequence, 357 residues long: MKFVDEAFIDVAAGDGGNGCVSFRHEKYKEFGGPNGGDGGRGGHVFAVADPSLNTLVDYRYSRRHEAKRGEHGMGSDMFGAAGDDITLKMPVGTIISDADTGEVLFELLKPGETITIAKGGDGGFGNMRFKSAINRAPRQKTPGWPGERRNLKLELKVLADVGLLGMPNAGKSTFIAAVSNARPKIADYPFTTLHPNLGVVRVGPEQSFVVADIPGLIEGASEGAGLGHQFLRHLQRTRLLLHVVDLAPFDESVDPVAQATAIVGELRKYDAELYEKPRWLVLNKLDMVPGDERAARVKDFVKRFRWKGPVFEISALTREGCEPLIQAIYQHVRAQQQAEQVQEVVDPRFADDAASD.

Residues 1 to 159 enclose the Obg domain; it reads MKFVDEAFID…RNLKLELKVL (159 aa). In terms of domain architecture, OBG-type G spans 160 to 334; that stretch reads ADVGLLGMPN…LIQAIYQHVR (175 aa). Residues 166–173, 191–195, 213–216, 284–287, and 315–317 contribute to the GTP site; these read GMPNAGKS, FTTLH, DIPG, NKLD, and SAL. Positions 173 and 193 each coordinate Mg(2+).

It belongs to the TRAFAC class OBG-HflX-like GTPase superfamily. OBG GTPase family. In terms of assembly, monomer. Mg(2+) is required as a cofactor.

It is found in the cytoplasm. An essential GTPase which binds GTP, GDP and possibly (p)ppGpp with moderate affinity, with high nucleotide exchange rates and a fairly low GTP hydrolysis rate. Plays a role in control of the cell cycle, stress response, ribosome biogenesis and in those bacteria that undergo differentiation, in morphogenesis control. The polypeptide is GTPase Obg (Paracidovorax citrulli (strain AAC00-1) (Acidovorax citrulli)).